A 94-amino-acid polypeptide reads, in one-letter code: Ribonuclease VapC3 (94 aa).

Residue Asp6 participates in Mg(2+) binding.

The protein belongs to the PINc/VapC protein family. Requires Mg(2+) as cofactor.

Functionally, toxic component of a type II toxin-antitoxin (TA) system. An RNase. Its cognate antitoxin is VapB3. This is Ribonuclease VapC3 (vapC3) from Methanocaldococcus jannaschii (strain ATCC 43067 / DSM 2661 / JAL-1 / JCM 10045 / NBRC 100440) (Methanococcus jannaschii).